The following is a 167-amino-acid chain: Urease accessory protein UreE (167 aa).

It belongs to the UreE family.

Its subcellular location is the cytoplasm. In terms of biological role, involved in urease metallocenter assembly. Binds nickel. Probably functions as a nickel donor during metallocenter assembly. In Pseudomonas aeruginosa (strain LESB58), this protein is Urease accessory protein UreE.